The following is a 362-amino-acid chain: Alpha-glucoside transport ATP-binding protein AglK (362 aa).

In terms of domain architecture, ABC transporter spans 4 to 235; that stretch reads LLLKDIRKSY…PANLFVARFI (232 aa). 36–43 provides a ligand contact to ATP; that stretch reads GPSGCGKS.

This sequence belongs to the ABC transporter superfamily.

The protein localises to the cell inner membrane. In terms of biological role, part of the binding-protein-dependent transport system for alpha-glucosides such as sucrose, maltose and trehalose. Probably responsible for energy coupling to the transport system. This Rhizobium meliloti (strain 1021) (Ensifer meliloti) protein is Alpha-glucoside transport ATP-binding protein AglK (aglK).